Reading from the N-terminus, the 340-residue chain is Glutamine synthetase (340 aa).

A GS beta-grasp domain is found at 3 to 82 (IKAEYIWIDG…LCEVLHTDLT (80 aa)). The GS catalytic domain maps to 88–340 (TRALLRPVAE…CTELARREQI (253 aa)). Residues glutamate 109, glutamate 111, glutamate 171, and glutamate 178 each coordinate Mg(2+). Glutamate 276 provides a ligand contact to L-glutamate.

Belongs to the glutamine synthetase family. In terms of assembly, homooctamer and homotetramer. It depends on Mg(2+) as a cofactor.

It is found in the cytoplasm. The catalysed reaction is L-glutamate + NH4(+) + ATP = L-glutamine + ADP + phosphate + H(+). Functionally, catalyzes the ATP-dependent biosynthesis of glutamine from glutamate and ammonia. In Streptomyces hygroscopicus, this protein is Glutamine synthetase.